The following is a 121-amino-acid chain: Heme-degrading monooxygenase (121 aa).

An ABM domain is found at Ile-2 to Val-101. Asn-6 is a binding site for Fe cation. The disordered stretch occupies residues Lys-76–Lys-98. Residues Asp-78–Lys-98 are compositionally biased toward basic and acidic residues. Heme is bound at residue His-84.

Belongs to the antibiotic biosynthesis monooxygenase family. Heme-degrading monooxygenase IsdG subfamily. Homodimer.

The protein localises to the cytoplasm. The enzyme catalyses heme b + 3 reduced [NADPH--hemoprotein reductase] + 3 O2 = biliverdin IXalpha + CO + Fe(2+) + 3 oxidized [NADPH--hemoprotein reductase] + 3 H2O + H(+). Functionally, allows bacterial pathogens to use the host heme as an iron source. Catalyzes the oxidative degradation of the heme macrocyclic porphyrin ring to the biliverdin in the presence of a suitable electron donor such as ascorbate or NADPH--cytochrome P450 reductase, with subsequent release of free iron. The polypeptide is Heme-degrading monooxygenase (Listeria welshimeri serovar 6b (strain ATCC 35897 / DSM 20650 / CCUG 15529 / CIP 8149 / NCTC 11857 / SLCC 5334 / V8)).